Consider the following 381-residue polypeptide: 2-oxoglutarate-dependent dioxygenase FGSG_00048 (381 aa).

The protein belongs to the iron/ascorbate-dependent oxidoreductase family. Requires Fe(2+) as cofactor.

Its pathway is mycotoxin biosynthesis. 2-oxoglutarate-dependent dioxygenase; part of the gene cluster that mediates the biosynthesis of gramillins A and B, bicyclic lipopeptides that induce cell death in maize leaves but not in wheat leaves. The nonribosomal peptide synthetase GRA1 incorporates respectively a glutamic adic (Glu), a leucine (Leu), a serine (Ser), a hydroxyglutamine (HOGln), a 2-amino decanoic acid, and 2 cysteins (CysB and CysA). The biosynthesis of 2-amino decanoic acid incorporated in gramillins could be initiated by a fatty acid synthase composed of the alpha and beta subunits FGSG_00036 and FGSG_11656. The cytochrome P450 monooxygenase FGSG_15680 could hydroxylate the fatty acid chain. Subsequent oxidation to the ketone by the oxidoreductase FGSG_00048 and transamination by aminotransferase FGSG_00049 could form 2-amino-decanoic acid. On the other hand, FGSG_15680 could also be responsible for the HO-modified glutamine at the gamma-position. Whether hydroxylation occurs on the fully assembled product or on the Gln residue prior to assembly into the gramillins requires further proof. The thioredoxin FGSG_00043 could also be required for the disulfide-bond formation between CysA and CysB. The specific involvement of the remaining proteins from the cluster is more difficult to discern, but could have broader regulatory (FGSG_00040 and FGSG_11657) or enzymatic functions (FGSG_00044 and FGSG_00045). The final C-domain of GRA1 does not possess the expected sequence of a termination CT domain, often implicated in macrocyclization and release of a cyclopeptidein fungal NRPs; and the thioesterase FGSG_00047 may act in concert with the terminal C-domain of GRA1 to catalyze the formation of the macrocyclic anhydride and release of the products. This chain is 2-oxoglutarate-dependent dioxygenase FGSG_00048, found in Gibberella zeae (strain ATCC MYA-4620 / CBS 123657 / FGSC 9075 / NRRL 31084 / PH-1) (Wheat head blight fungus).